Consider the following 232-residue polypeptide: Membrane steroid-binding protein 1 (232 aa).

A helical transmembrane segment spans residues 25–45 (AAFFTAVAAAAALYHVVSGIF). 2 disordered regions span residues 48 to 77 (PPPP…VSEE) and 172 to 232 (TVPV…AKES). The Cytochrome b5 heme-binding domain occupies 71–170 (LGEVSEEELR…GKYVKVGTVK (100 aa)). The segment at 73–170 (EVSEEELRQY…GKYVKVGTVK (98 aa)) is steroid-binding. Residues 179–193 (APSTSPETTETAAAA) show a composition bias toward low complexity. The segment covering 194-219 (EPEKAPATEEKPREVSSEEVKEKEDA) has biased composition (basic and acidic residues).

It belongs to the cytochrome b5 family. MAPR subfamily. As to quaternary structure, interacts with SERL2. As to expression, expressed in leaf sheaths, leaf blades and panicles.

It localises to the cell membrane. Binds multiple steroid compounds. May act as a coreceptor with SERL2 and enhance its endocytosis. The protein is Membrane steroid-binding protein 1 of Oryza sativa subsp. japonica (Rice).